The chain runs to 283 residues: Glutamate racemase (283 aa).

Substrate-binding positions include 28 to 29 (DS) and 60 to 61 (YG). C92 acts as the Proton donor/acceptor in catalysis. 93–94 (NT) is a binding site for substrate. C204 serves as the catalytic Proton donor/acceptor. Substrate is bound at residue 205-206 (TH).

Belongs to the aspartate/glutamate racemases family.

The catalysed reaction is L-glutamate = D-glutamate. It participates in cell wall biogenesis; peptidoglycan biosynthesis. Its function is as follows. Provides the (R)-glutamate required for cell wall biosynthesis. This chain is Glutamate racemase, found in Klebsiella pneumoniae (strain 342).